A 147-amino-acid chain; its full sequence is Hemoglobin subunit epsilon-Y2 (147 aa).

One can recognise a Globin domain in the interval 3–147 (NFTAEEKTLI…VATALSHKYH (145 aa)). At Ser51 the chain carries Phosphoserine. 2 residues coordinate heme b: His64 and His93.

This sequence belongs to the globin family. High expression in yolk sac blood islands, fetal liver, and embryonic erythrocytes. Very low levels in adult liver and spleen.

In terms of biological role, hemoglobin epsilon chain is a beta-type chain found in early embryos. This Mus musculus (Mouse) protein is Hemoglobin subunit epsilon-Y2 (Hbb-y).